A 61-amino-acid chain; its full sequence is Ferredoxin-3 (61 aa).

4Fe-4S ferredoxin-type domains lie at 2-31 and 32-61; these read YKITIDTDKCTGDGECVDVCPVEVYELQDG and KAVAVNEDECLGCESCVEVCEQDALTVEEN. Residues cysteine 11 and cysteine 17 each contribute to the [3Fe-4S] cluster site. 4 residues coordinate [4Fe-4S] cluster: cysteine 21, cysteine 41, cysteine 44, and cysteine 47. Cysteine 51 contributes to the [3Fe-4S] cluster binding site.

[3Fe-4S] cluster serves as cofactor. The cofactor is [4Fe-4S] cluster.

Functionally, ferredoxins are iron-sulfur proteins that transfer electrons in a wide variety of metabolic reactions. In Desulfocurvibacter africanus (Desulfovibrio africanus), this protein is Ferredoxin-3.